Consider the following 629-residue polypeptide: tRNA uridine 5-carboxymethylaminomethyl modification enzyme MnmG (629 aa).

Residues 13 to 18 (GGGHAG), V125, and S180 each bind FAD. 273–287 (GPRYCPSIEDKVMRF) contributes to the NAD(+) binding site. FAD is bound at residue Q370.

Belongs to the MnmG family. In terms of assembly, homodimer. Heterotetramer of two MnmE and two MnmG subunits. Requires FAD as cofactor.

It localises to the cytoplasm. Functionally, NAD-binding protein involved in the addition of a carboxymethylaminomethyl (cmnm) group at the wobble position (U34) of certain tRNAs, forming tRNA-cmnm(5)s(2)U34. This Pasteurella multocida (strain Pm70) protein is tRNA uridine 5-carboxymethylaminomethyl modification enzyme MnmG.